Reading from the N-terminus, the 1004-residue chain is Zinc finger protein 316 (1004 aa).

Positions 1 to 148 are disordered; sequence MAALHTTPDS…EEEEDEDEDD (148 aa). Alanine 2 carries the N-acetylalanine modification. At threonine 7 the chain carries Phosphothreonine. A Phosphoserine modification is found at serine 10. Positions 21 to 60 are enriched in acidic residues; it reads GSECDPDQEEEEEEEEKGEEVQEVEEEEEEIVVEEEEEGV. Over residues 61–72 the composition is skewed to low complexity; that stretch reads AEVVQDAQVEAV. Residues 73–95 are compositionally biased toward acidic residues; it reads AEVEVEADVEEEDVKEVLAEEEC. Phosphoserine is present on serine 112. Acidic residues predominate over residues 132–148; that stretch reads EDLEEEEEEEEDEDEDD. Positions 158-229 constitute a KRAB domain; sequence VTFEDVAVYF…DSPRPEEGDI (72 aa). 5 C2H2-type zinc fingers span residues 345 to 367, 373 to 395, 401 to 423, 429 to 451, and 457 to 479; these read TTCD…QRYH, FGCE…QRTH, FPCP…RRIH, YRCA…QRTH, and YPCS…QAVH. Residues 485-512 form a C2H2-type 6; degenerate zinc finger; it reads HCCPDCGQAFRLRADFQRHRRGGGCAEA. A disordered region spans residues 508 to 574; sequence GCAEAGGDGP…TPSGKVDPAP (67 aa). Acidic residues predominate over residues 531 to 557; sequence EDTDPGPEGSEVGEADGEAEAAAEERE. 5 consecutive C2H2-type zinc fingers follow at residues 691–713, 719–741, 747–769, 775–797, and 803–825; these read WICS…QRYH, HRCA…RRTH, FPCP…VRGH, FVCG…GRAH, and YACG…QWAH. A Glycyl lysine isopeptide (Lys-Gly) (interchain with G-Cter in SUMO2) cross-link involves residue lysine 829. 4 C2H2-type zinc fingers span residues 831 to 853, 859 to 881, 887 to 909, and 915 to 937; these read HRCP…RRTH, FRCA…RRGH, FPCP…QRTH, and YACA…MKTH. Residues 936–976 form a disordered region; it reads THRGATAAPGSGSAPAPAPKPEAAAKGPSSAGPGERGSALL. A compositionally biased stretch (low complexity) spans 939–968; the sequence is GATAAPGSGSAPAPAPKPEAAAKGPSSAGP. A Glycyl lysine isopeptide (Lys-Gly) (interchain with G-Cter in SUMO2) cross-link involves residue lysine 955.

The protein belongs to the krueppel C2H2-type zinc-finger protein family.

The protein localises to the nucleus. May be involved in transcriptional regulation. The sequence is that of Zinc finger protein 316 (ZNF316) from Homo sapiens (Human).